The chain runs to 309 residues: Gamma-hemolysin component A (309 aa).

The N-terminal stretch at Met1–Ala29 is a signal peptide.

This sequence belongs to the aerolysin family. In terms of assembly, toxicity requires sequential binding and synergistic association of a class S and a class F component which form heterooligomeric complexes. HlgA (class S) associates with HlgB (class F) thus forming an AB toxin in strains producing both gamma-hemolysins and leukocidins. HlgA and LukF-PV can also form a complex.

The protein resides in the secreted. Functionally, toxin that seems to act by forming pores in the membrane of the cell. Has a hemolytic and a leucotoxic activity. This chain is Gamma-hemolysin component A (hlgA), found in Staphylococcus aureus (strain COL).